We begin with the raw amino-acid sequence, 253 residues long: Sulfate transporter CysZ (253 aa).

A run of 4 helical transmembrane segments spans residues 31 to 51 (FVILPLLVNILLMGGAFWWLF), 75 to 95 (LLWPLAVISVLLVFGYFFSTI), 151 to 171 (IVLLILYFIPGIGQTVAPVLW), and 222 to 242 (IPLLNLFIMPVAVCGATAMWV).

It belongs to the CysZ family.

It localises to the cell inner membrane. High affinity, high specificity proton-dependent sulfate transporter, which mediates sulfate uptake. Provides the sulfur source for the cysteine synthesis pathway. The sequence is that of Sulfate transporter CysZ from Shigella flexneri serotype 5b (strain 8401).